The sequence spans 218 residues: 7-cyano-7-deazaguanine synthase (218 aa).

Phe-9–Leu-19 contributes to the ATP binding site. Zn(2+)-binding residues include Cys-185, Cys-193, Cys-196, and Cys-199.

Belongs to the QueC family. Zn(2+) serves as cofactor.

The enzyme catalyses 7-carboxy-7-deazaguanine + NH4(+) + ATP = 7-cyano-7-deazaguanine + ADP + phosphate + H2O + H(+). Its pathway is purine metabolism; 7-cyano-7-deazaguanine biosynthesis. In terms of biological role, catalyzes the ATP-dependent conversion of 7-carboxy-7-deazaguanine (CDG) to 7-cyano-7-deazaguanine (preQ(0)). This Pseudoalteromonas atlantica (strain T6c / ATCC BAA-1087) protein is 7-cyano-7-deazaguanine synthase.